An 88-amino-acid chain; its full sequence is Phosphocarrier protein HPr (88 aa).

One can recognise an HPr domain in the interval M1–E88. The active-site Pros-phosphohistidine intermediate is H15. S46 carries the phosphoserine; by HPrK/P modification.

It belongs to the HPr family.

It is found in the cytoplasm. With respect to regulation, phosphorylation on Ser-46 inhibits the phosphoryl transfer from enzyme I to HPr. General (non sugar-specific) component of the phosphoenolpyruvate-dependent sugar phosphotransferase system (sugar PTS). This major carbohydrate active-transport system catalyzes the phosphorylation of incoming sugar substrates concomitantly with their translocation across the cell membrane. The phosphoryl group from phosphoenolpyruvate (PEP) is transferred to the phosphoryl carrier protein HPr by enzyme I. Phospho-HPr then transfers it to the PTS EIIA domain. This is Phosphocarrier protein HPr (ptsH) from Treponema pallidum (strain Nichols).